We begin with the raw amino-acid sequence, 433 residues long: Trigger factor (433 aa).

The PPIase FKBP-type domain occupies 163 to 248 (GDTVNIDFSG…VNEIKFKEVP (86 aa)).

This sequence belongs to the FKBP-type PPIase family. Tig subfamily.

Its subcellular location is the cytoplasm. It catalyses the reaction [protein]-peptidylproline (omega=180) = [protein]-peptidylproline (omega=0). Functionally, involved in protein export. Acts as a chaperone by maintaining the newly synthesized protein in an open conformation. Functions as a peptidyl-prolyl cis-trans isomerase. This chain is Trigger factor, found in Staphylococcus aureus (strain COL).